Reading from the N-terminus, the 359-residue chain is Probable C-C chemokine receptor type 3 (359 aa).

At 1–38 (MAFNTDEIKTVVESFETTPYEYEWAPPCEKVRIKELGS) the chain is on the extracellular side. A helical membrane pass occupies residues 39-64 (WLLPPLYSLVFIIGLLGNMMVVLILI). The Cytoplasmic portion of the chain corresponds to 65–68 (KYRK). Residues 69 to 95 (LQIMTNIYLFNLAISDLLFLFTVPFWI) traverse the membrane as a helical segment. Topologically, residues 96-111 (HYVLWNEWGFGHYMCK) are extracellular. A disulfide bridge links cysteine 110 with cysteine 187. The helical transmembrane segment at 112–133 (MLSGFYYLALYSEIFFIILLTI) threads the bilayer. The Cytoplasmic segment spans residues 134–150 (DRYLAIVHAVFALRART). A helical membrane pass occupies residues 151 to 175 (VTFATITSIITWGLAGLAALPEFIF). At 176-201 (HESQDSFGEFSCSPRYPEGEEDSWKR) the chain is on the extracellular side. A helical membrane pass occupies residues 202 to 227 (FHALRMNIFGLALPLLIMVICYSGII). At 228-243 (KTLLRCPNKKKHKAIR) the chain is on the cytoplasmic side. A helical transmembrane segment spans residues 244–268 (LIFVVMIVFFIFWTPYNLVLLFSAF). Over 269–285 (HSTFLETSCQQSKHLDL) the chain is Extracellular. Residues 286–309 (AMQVTEVIAYTHCCINPVIYAFVG) form a helical membrane-spanning segment. Topologically, residues 310–359 (ERFRKHLRLFFHRNVAVYLGKYIPFLPGEKMERTSSVSPSTGEQEISVVF) are cytoplasmic.

This sequence belongs to the G-protein coupled receptor 1 family. Detected in skeletal muscle and in trace amounts in leukocytes.

The protein localises to the cell membrane. Its function is as follows. Receptor for C-C type chemokine. Binds and responds to a variety of chemokines, including CCL11, CCL26, CCL7, CCL13, RANTES(CCL5) and CCL15. Subsequently transduces a signal by increasing the intracellular calcium ions level. In addition acts as a possible functional receptor for NARS1. The chain is Probable C-C chemokine receptor type 3 (Ccr3) from Mus musculus (Mouse).